Reading from the N-terminus, the 435-residue chain is MVISPSEVVSVRRRRVSRVATISMHTSPLDQPGTGDAGGMNVYIVEAARRLAQLGVEVEIFTRQTSRDLPPVAEIAPGVSVRHVTAGPYEELDKGDLPGQLCGFLSGVLRTEAMYEPGRYDVIHSHYWLSGQVGWLAKERWGVPLVHTMHTMAKVKNLLLAEDDRPEPTARVLGEEQVVQVADRLVANTPTEAQELIDLYGAAPGRVEVVNPGVNLNVFQPASKGAARHRLDLPQDAHVLLFVGRVQPLKAPDVLLRAAARMLIDDPSLRSRLVVVCVGGPSGNGLARPSYLTDVAASLGISDVVRIVPPAPQHELADWYRAADVTVVPSHNESFGLVALESQACGTPVAAASVGGLRTAVADGVSGVLVEGHDPQDWARVLSRFVHRPAWRDALAAGAVAQAAAFGWSATAARLADVYAGAMANLHHVPIAVSS.

H25 is a binding site for 1D-myo-inositol 3-phosphate. UDP-N-acetyl-alpha-D-glucosamine-binding positions include 31-32 and G39; that span reads QP. 1D-myo-inositol 3-phosphate-binding positions include 36–41, K94, Y127, T151, and R171; that span reads DAGGMN. 2 residues coordinate UDP-N-acetyl-alpha-D-glucosamine: R245 and K250. Residues Y320, R321, and A323 each contribute to the Mg(2+) site. E333 and E341 together coordinate UDP-N-acetyl-alpha-D-glucosamine. Residue T347 participates in Mg(2+) binding.

Belongs to the glycosyltransferase group 1 family. MshA subfamily. Homodimer.

The catalysed reaction is 1D-myo-inositol 3-phosphate + UDP-N-acetyl-alpha-D-glucosamine = 1D-myo-inositol 2-acetamido-2-deoxy-alpha-D-glucopyranoside 3-phosphate + UDP + H(+). Its function is as follows. Catalyzes the transfer of a N-acetyl-glucosamine moiety to 1D-myo-inositol 3-phosphate to produce 1D-myo-inositol 2-acetamido-2-deoxy-glucopyranoside 3-phosphate in the mycothiol biosynthesis pathway. The chain is D-inositol 3-phosphate glycosyltransferase from Streptosporangium roseum (strain ATCC 12428 / DSM 43021 / JCM 3005 / KCTC 9067 / NCIMB 10171 / NRRL 2505 / NI 9100).